We begin with the raw amino-acid sequence, 27 residues long: Pregnancy-associated glycoprotein 59 (27 aa).

The protein belongs to the peptidase A1 family. Glycosylated. In terms of tissue distribution, placenta.

The sequence is that of Pregnancy-associated glycoprotein 59 (PAG59) from Capra hircus (Goat).